A 277-amino-acid polypeptide reads, in one-letter code: Phosphonoacetaldehyde hydrolase-like protein (277 aa).

This sequence belongs to the HAD-like hydrolase superfamily. PhnX family.

The sequence is that of Phosphonoacetaldehyde hydrolase-like protein (phnX2) from Syntrophobacter fumaroxidans (strain DSM 10017 / MPOB).